The sequence spans 270 residues: MNKILRGVIQFRNTIRKDLVKQFEEIKNNPSPTAVMFTCMDSRMLPTRFTQSQVGDMFVVRNAGNMIPDAPNYGAFSEVSVNTEPAALELAVKRGGIRHIVVCGHSDCKAINTLYGLHQCPKNFDVTSPMDHWVRRNGFASVKRLNERLHRGPSSMKFESEVAPSQSFDAIIDPMDTLAMEDKLSQINVLQQLINICSHEFLKEYLESGRLHIHGMWFDIYKGEDYLFSKDKKRFVVIDEKTVTDLLAELNARYPVPEDQDGPVAFAKSN.

C39, D41, H105, and C108 together coordinate Zn(2+).

It belongs to the beta-class carbonic anhydrase family. As to quaternary structure, oligomer. Zn(2+) is required as a cofactor.

It catalyses the reaction hydrogencarbonate + H(+) = CO2 + H2O. Functionally, reversible hydration of carbon dioxide. The chain is Beta carbonic anhydrase 1 (bca-1) from Caenorhabditis elegans.